The chain runs to 828 residues: E3 ubiquitin-protein ligase bre-1 (828 aa).

The disordered stretch occupies residues 1 to 25 (MMKRNNEGIGGEGVANSPPDDTQQK). The segment at 1 to 309 (MMKRNNEGIG…SREIEALRAD (309 aa)) is interaction with ubc-1. Coiled coils occupy residues 53-92 (QAAK…FLKV) and 185-251 (HKEL…TEKQ). Over residues 269–298 (ASGNATASSSATLNQSEKKMGSPGSPPSES) the composition is skewed to low complexity. Positions 269-304 (ASGNATASSSATLNQSEKKMGSPGSPPSESTSREIE) are disordered. 3 coiled-coil regions span residues 311–345 (DEQA…KMET), 460–616 (VNTL…RNLK), and 660–756 (DEVL…NDSA). Residues 776 to 815 (CPSCKTRPKDCIMLKCYHLFCETCIKTMYDTRQRKCPKCN) form an RING-type zinc finger.

The protein belongs to the BRE1 family. As to quaternary structure, interacts with ubc-1. Interacts with mrg-1.

Its subcellular location is the nucleus. It catalyses the reaction S-ubiquitinyl-[E2 ubiquitin-conjugating enzyme]-L-cysteine + [acceptor protein]-L-lysine = [E2 ubiquitin-conjugating enzyme]-L-cysteine + N(6)-ubiquitinyl-[acceptor protein]-L-lysine.. It participates in protein modification; protein ubiquitination. Its function is as follows. E3 ubiquitin-protein ligase that mediates monoubiquitination of 'Lys-117' of histone H2B. H2B 'Lys-117' ubiquitination gives a specific tag for epigenetic transcriptional activation and is also prerequisite for histone H3 'Lys-4' and 'Lys-79' methylation. Involved in regulating stem cell proliferative fate. The polypeptide is E3 ubiquitin-protein ligase bre-1 (Caenorhabditis briggsae).